Consider the following 727-residue polypeptide: DNA topoisomerase 3 (727 aa).

The 134-residue stretch at 3-136 folds into the Toprim domain; the sequence is KTVVLAEKPS…IKRLWISSVT (134 aa). Positions 9 and 105 each coordinate Mg(2+). The Topo IA-type catalytic domain occupies 153–593; it reads YENLYHSAVA…DMKAYAHQTV (441 aa). Positions 187–192 are interaction with DNA; sequence SCGRVQ. The active-site O-(5'-phospho-DNA)-tyrosine intermediate is Tyr310. The segment covering 685 to 699 has biased composition (basic and acidic residues); that stretch reads KRKNKDKARATKRDV. Positions 685-714 are disordered; that stretch reads KRKNKDKARATKRDVSSYMKKQNKDEPINN.

The protein belongs to the type IA topoisomerase family. Mg(2+) serves as cofactor.

The catalysed reaction is ATP-independent breakage of single-stranded DNA, followed by passage and rejoining.. In terms of biological role, releases the supercoiling and torsional tension of DNA, which is introduced during the DNA replication and transcription, by transiently cleaving and rejoining one strand of the DNA duplex. Introduces a single-strand break via transesterification at a target site in duplex DNA. The scissile phosphodiester is attacked by the catalytic tyrosine of the enzyme, resulting in the formation of a DNA-(5'-phosphotyrosyl)-enzyme intermediate and the expulsion of a 3'-OH DNA strand. The free DNA strand then undergoes passage around the unbroken strand, thus removing DNA supercoils. Finally, in the religation step, the DNA 3'-OH attacks the covalent intermediate to expel the active-site tyrosine and restore the DNA phosphodiester backbone. This is DNA topoisomerase 3 from Bacillus subtilis (strain 168).